The chain runs to 871 residues: Pentatricopeptide repeat-containing protein DOT4, chloroplastic (871 aa).

The N-terminal 28 residues, 1–28 (MAMLVTNLSSSSFCFFSSPHLQNQKEIR), are a transit peptide targeting the chloroplast. 18 PPR repeats span residues 60–94 (SVTD…DIDP), 96–127 (TLCS…GFVI), 128–158 (DSNL…VKIE), 159–193 (KALF…GVEM), 194–228 (DSYT…GFGE), 229–259 (RNSV…MTER), 260–294 (DVIS…GIEI), 295–329 (DLAT…CFSR), 330–360 (EDRF…MSDR), 361–395 (SVVS…GISP), 396–430 (DVYT…DLGF), 431–465 (DIFV…DIIS), 466–497 (WNTI…RFSP), 498–532 (DERT…GYFS), 533–563 (DRHV…IASK), 564–598 (DLVS…GIEA), 599–629 (DEIS…MRHE), and 635–665 (TVEH…MPIP). The segment at 670–745 (IWGALLCGCR…NPGCSWIEIK (76 aa)) is type E motif. Residues 746–776 (GRVNIFVAGDSSNPETENIEAFLRKVRARMI) form a type E(+) motif region. Residues 777–871 (EEGYSPLTKY…DGHCSCRGFW (95 aa)) are type DYW motif.

Belongs to the PPR family. PCMP-H subfamily. Zn(2+) is required as a cofactor. Weakly expressed in leaves.

Its subcellular location is the plastid. It localises to the chloroplast. Functionally, plays a major role in single RNA editing events in chloroplasts. Acts as a site-recognition transacting factor involved in the edition of the unique site (corresponding to cytidine-488) of rpoC1, which is a plastid-encoded subunit of the chloroplast DNA-directed RNA polymerase. May provide the catalytic activity for editing site conversion. Involved in leaf vasculature patterning. The protein is Pentatricopeptide repeat-containing protein DOT4, chloroplastic of Arabidopsis thaliana (Mouse-ear cress).